The sequence spans 234 residues: Protein rgg8 (234 aa).

Its subcellular location is the cytoplasm. It localises to the nucleus. In Schizosaccharomyces pombe (strain 972 / ATCC 24843) (Fission yeast), this protein is Protein rgg8 (rgg8).